A 607-amino-acid chain; its full sequence is DNA primase (607 aa).

A CHC2-type zinc finger spans residues 39 to 63; the sequence is CPFHDDKNPSMSISSSKNIFKCWAC. Residues 267-350 enclose the Toprim domain; the sequence is NQLFIVEGYF…IVEIVQWEHN (84 aa). Positions 273, 319, and 321 each coordinate Mg(2+).

Belongs to the DnaG primase family. As to quaternary structure, monomer. Interacts with DnaB. Zn(2+) serves as cofactor. Mg(2+) is required as a cofactor.

It catalyses the reaction ssDNA + n NTP = ssDNA/pppN(pN)n-1 hybrid + (n-1) diphosphate.. Its function is as follows. RNA polymerase that catalyzes the synthesis of short RNA molecules used as primers for DNA polymerase during DNA replication. In Mycoplasma genitalium (strain ATCC 33530 / DSM 19775 / NCTC 10195 / G37) (Mycoplasmoides genitalium), this protein is DNA primase.